A 174-amino-acid polypeptide reads, in one-letter code: VAAAQALREIERLACWSVKQANLTTSLLGDLLDDVTSIRHAVLQNRAAIDFLLLAHGHGCEDIAGMCCFNLSDHSESIQKKFQLMKEHVNKIGVDSDPIGSWLRGLFGGIGEWAVHLLKGLLLGLVVILLLVVCLPCLLQFVSSSIRKMIDNSLGYREERKKFQEAYKQPERVV.

The Extracellular segment spans residues 1-121 (VAAAQALREI…EWAVHLLKGL (121 aa)). Residues 4–54 (AQALREIERLACWSVKQANLTTSLLGDLLDDVTSIRHAVLQNRAAIDFLLL) are a coiled coil. Cysteine 60 and cysteine 67 are joined by a disulfide. The stretch at 72–102 (SDHSESIQKKFQLMKEHVNKIGVDSDPIGSW) forms a coiled coil. Residues 122–142 (LLGLVVILLLVVCLPCLLQFV) traverse the membrane as a helical segment. 2 S-palmitoyl cysteine; by host lipidation sites follow: cysteine 134 and cysteine 137. Over 143–174 (SSSIRKMIDNSLGYREERKKFQEAYKQPERVV) the chain is Cytoplasmic.

This sequence belongs to the Alpharetroviruses envelope glycoprotein family. Heterodimer with the surface protein. The mature envelope protein (Env) consists of a trimer of SU-TM heterodimers attached by a labile interchain disulfide bond. In terms of processing, specific enzymatic cleavages in vivo yield mature proteins. Envelope glycoproteins are synthesized as an inactive precursor that is N-glycosylated and processed likely by host cell furin or by a furin-like protease in the Golgi to yield the mature SU and TM proteins. The cleavage site between SU and TM requires the minimal sequence [KR]-X-[KR]-R. Post-translationally, the transmembrane protein is palmitoylated. Palmitoylation is necessary for glycoprotein function and infectivity.

The protein resides in the virion membrane. The protein localises to the host cell membrane. Functionally, the transmembrane protein (TM) acts as a class I viral fusion protein. Under the current model, the protein has at least 3 conformational states: pre-fusion native state, pre-hairpin intermediate state, and post-fusion hairpin state. During viral and target cell membrane fusion, the coiled coil regions (heptad repeats) assume a trimer-of-hairpins structure, positioning the fusion peptide in close proximity to the C-terminal region of the ectodomain. The formation of this structure appears to drive apposition and subsequent fusion of viral and target cell membranes. Membranes fusion leads to delivery of the nucleocapsid into the cytoplasm. The polypeptide is Envelope glycoprotein (env) (UR2 avian sarcoma virus (UR2SV)).